Consider the following 271-residue polypeptide: Transmembrane protein 150A (271 aa).

Topologically, residues 1-2 (MT) are cytoplasmic. The helical transmembrane segment at 3–23 (AWILLPVSLSAFSITGIWTVY) threads the bilayer. Topologically, residues 24–75 (AMAVMNHHVCPVENWSYNESCPPDPAEQGGPKTCCTLDDVPLISKCGSYPPE) are extracellular. N-linked (GlcNAc...) asparagine glycosylation is found at N37 and N41. Residues 76 to 96 (SCLFSLIGNMGAFMVALICLL) form a helical membrane-spanning segment. Residues 97-108 (RYGQLLEQSRHS) lie on the Cytoplasmic side of the membrane. A helical transmembrane segment spans residues 109 to 129 (WVNTTALITGCTNAAGLLVVG). At 130 to 140 (NFQVDHARSLH) the chain is on the extracellular side. Residues 141 to 161 (YVGAGVAFPAGLLFVCLHCAL) form a helical membrane-spanning segment. The Cytoplasmic segment spans residues 162–178 (SYQGATAPLDLAVAYLR). A helical transmembrane segment spans residues 179–199 (SVLAVIAFITLVLSGVFFVHE). Over 200 to 211 (SSQLQHGAALCE) the chain is Extracellular. The chain crosses the membrane as a helical span at residues 212–232 (WVCVIDILIFYGTFSYEFGAV). Residues 233-271 (SSDTLVAALQPTPGRACKSSGSSSTSTHLNCAPESIAMI) are Cytoplasmic-facing.

This sequence belongs to the DRAM/TMEM150 family. Interacts (via C-terminal cytoplasmic tail) with PI4KA.

It is found in the cell membrane. Regulates localization of phosphatidylinositol 4-kinase (PI4K) to the plasma membrane, possibly by reducing the association of TTC7 (TTC7A or TTC7B) with the PI4K complex. Acts as a regulator of phosphatidylinositol 4-phosphate (PtdIns(4)P) synthesis. May also play a role in fasting-induced catabolism. This Homo sapiens (Human) protein is Transmembrane protein 150A (TMEM150A).